The chain runs to 377 residues: Pseudouridylate synthase RPUSD4, mitochondrial (377 aa).

The transit peptide at 1–35 (MAAPLLGSPGLQVLSMSSRTGKLFTPSSRSFCSRA) directs the protein to the mitochondrion. Asp153 is an active-site residue.

Belongs to the pseudouridine synthase RluA family. In terms of assembly, interacts with 16S mt-rRNA, mt-tRNA(Phe) and mt-tRNA(Met). Forms a regulatory protein-RNA complex, consisting of RCC1L, NGRN, RPUSD3, RPUSD4, TRUB2, FASTKD2 and 16S mt-rRNA.

It is found in the mitochondrion matrix. Its subcellular location is the nucleus. It localises to the cytoplasm. The catalysed reaction is uridine in 5S rRNA = pseudouridine in 5S rRNA. It catalyses the reaction a uridine in tRNA = a pseudouridine in tRNA. The enzyme catalyses a uridine in mRNA = a pseudouridine in mRNA. In terms of biological role, catalyzes uridine to pseudouridine isomerization (pseudouridylation) of different mitochondrial RNA substrates. Acts on position 1397 in 16S mitochondrial ribosomal RNA (16S mt-rRNA). This modification is required for the assembly of 16S mt-rRNA into a functional mitochondrial ribosome. As a component of a functional protein-RNA module, consisting of RCC1L, NGRN, RPUSD3, RPUSD4, TRUB2, FASTKD2 and 16S mt-rRNA, controls 16S mt-rRNA abundance and is required for intra-mitochondrial translation. Acts on position 39 in mitochondrial tRNA(Phe). Also catalyzes pseudouridylation of mRNAs in nucleus: acts as a regulator of pre-mRNA splicing by mediating pseudouridylation of pre-mRNAs at locations associated with alternatively spliced regions. Pseudouridylation of pre-mRNAs near splice sites directly regulates mRNA splicing and mRNA 3'-end processing. The sequence is that of Pseudouridylate synthase RPUSD4, mitochondrial from Rattus norvegicus (Rat).